A 221-amino-acid chain; its full sequence is Guanylate kinase (221 aa).

A Guanylate kinase-like domain is found at 18-196; it reads GFLFILSSPS…SASLIKSIYL (179 aa). An ATP-binding site is contributed by 25–32; the sequence is SPSGAGKS.

It belongs to the guanylate kinase family.

It localises to the cytoplasm. The catalysed reaction is GMP + ATP = GDP + ADP. Essential for recycling GMP and indirectly, cGMP. This Bartonella quintana (strain Toulouse) (Rochalimaea quintana) protein is Guanylate kinase.